The primary structure comprises 466 residues: Cytochrome P450 85A (466 aa).

Residues 2-22 (ALFMAILGVLVLLLCLCSALL) form a helical membrane-spanning segment. A heme-binding site is contributed by Cys414.

It belongs to the cytochrome P450 family. Heme is required as a cofactor.

It localises to the membrane. In terms of biological role, catalyzes the C6-oxidation step in brassinosteroids biosynthesis. This chain is Cytochrome P450 85A, found in Phaseolus vulgaris (Kidney bean).